A 140-amino-acid polypeptide reads, in one-letter code: Probable disulfide formation protein C 2 (140 aa).

A helical membrane pass occupies residues 6–25 (KYHIAIAWTIATSAMLISLI). Residues C35 and C38 are joined by a disulfide bond. The next 2 membrane-spanning stretches (helical) occupy residues 40-59 (YQRMAMYPLVLILGIGMYRK) and 66-83 (YAFPFACIGLIISVYQIT). Cysteines 95 and 101 form a disulfide. A helical transmembrane segment spans residues 110-134 (GFISIPMLSFVGFLAIIILLYINQI).

This sequence belongs to the DsbB family. BdbC subfamily.

The protein resides in the cell membrane. In terms of biological role, required for disulfide bond formation in some proteins. The polypeptide is Probable disulfide formation protein C 2 (bdbC2) (Bacillus anthracis).